Here is a 467-residue protein sequence, read N- to C-terminus: Asparagine--tRNA ligase (467 aa).

This sequence belongs to the class-II aminoacyl-tRNA synthetase family. Homodimer.

The protein resides in the cytoplasm. The catalysed reaction is tRNA(Asn) + L-asparagine + ATP = L-asparaginyl-tRNA(Asn) + AMP + diphosphate + H(+). In Legionella pneumophila (strain Corby), this protein is Asparagine--tRNA ligase.